We begin with the raw amino-acid sequence, 115 residues long: Large ribosomal subunit protein bL20 (115 aa).

The protein belongs to the bacterial ribosomal protein bL20 family.

Its function is as follows. Binds directly to 23S ribosomal RNA and is necessary for the in vitro assembly process of the 50S ribosomal subunit. It is not involved in the protein synthesizing functions of that subunit. This Chlorobium phaeovibrioides (strain DSM 265 / 1930) (Prosthecochloris vibrioformis (strain DSM 265)) protein is Large ribosomal subunit protein bL20.